The following is a 400-amino-acid chain: Argininosuccinate synthase (400 aa).

ATP is bound by residues 10–18 and Ala38; that span reads AYSGGVDTS. Position 89 (Tyr89) interacts with L-citrulline. Gly119 provides a ligand contact to ATP. L-aspartate contacts are provided by Thr121, Asn125, and Asp126. Asn125 contacts L-citrulline. Arg129, Ser177, Ser186, Glu262, and Tyr274 together coordinate L-citrulline.

This sequence belongs to the argininosuccinate synthase family. Type 1 subfamily. In terms of assembly, homotetramer.

It localises to the cytoplasm. It catalyses the reaction L-citrulline + L-aspartate + ATP = 2-(N(omega)-L-arginino)succinate + AMP + diphosphate + H(+). The protein operates within amino-acid biosynthesis; L-arginine biosynthesis; L-arginine from L-ornithine and carbamoyl phosphate: step 2/3. This chain is Argininosuccinate synthase, found in Prochlorococcus marinus (strain NATL1A).